The primary structure comprises 848 residues: Trimethylamine-N-oxide reductase 1 (848 aa).

A signal peptide (tat-type signal) is located at residues 1-39 (MNNNDLFQASRRRFLAQLGGLTVAGMLGPSLLTPRRATA). Serine 191 provides a ligand contact to Mo-bis(molybdopterin guanine dinucleotide).

This sequence belongs to the prokaryotic molybdopterin-containing oxidoreductase family. As to quaternary structure, interacts with the N-terminal domain of TorC. It depends on Mo-bis(molybdopterin guanine dinucleotide) as a cofactor. Post-translationally, exported by the Tat system. The position of the signal peptide cleavage has been experimentally proven.

The protein localises to the periplasm. The catalysed reaction is trimethylamine + 2 Fe(III)-[cytochrome c] + H2O = trimethylamine N-oxide + 2 Fe(II)-[cytochrome c] + 3 H(+). Its function is as follows. Reduces trimethylamine-N-oxide (TMAO) into trimethylamine; an anaerobic reaction coupled to energy-yielding reactions. This chain is Trimethylamine-N-oxide reductase 1 (torA), found in Escherichia coli (strain K12).